The primary structure comprises 135 residues: RxLR effector protein PITG_02860 (135 aa).

Positions 1–18 (MRLAFLLLAVSHFICGNA) are cleaved as a signal peptide. The RxLR-dEER motif lies at 48–64 (RKLLRTDERLSEANEER). The NRL1-binding domain stretch occupies residues 126-135 (LKDPQAFRGP).

Belongs to the RxLR effector family. In terms of assembly, interacts with host ubiquitin E3 ligase NRL1.

Its subcellular location is the secreted. The protein localises to the host cytoplasm. It is found in the host nucleus. The protein resides in the host nucleoplasm. Its function is as follows. Effector that promotes P.infestans virulence and suppresses pattern-triggered immunity (PTI). Interacts with the host ubiquitin E3 ligase NRL1 and enhances the association between NRL1 and SWAP70 to promote proteasome-mediated degradation of SWAP70, which results in the suppression of immunity. This Phytophthora infestans (strain T30-4) (Potato late blight agent) protein is RxLR effector protein PITG_02860.